We begin with the raw amino-acid sequence, 163 residues long: Early nodulin-like protein 20 (163 aa).

The N-terminal stretch at 1–25 (MMGKYLWALVYVTVMILIIVVEVES) is a signal peptide. A Phytocyanin domain is found at 26 to 126 (SLHRVGGGRY…GMKLAITVLP (101 aa)). N-linked (GlcNAc...) asparagine glycans are attached at residues Asn42, Asn63, Asn73, Asn88, and Asn135. A disulfide bond links Cys80 and Cys114. The GPI-anchor amidated serine moiety is linked to residue Ser138. The propeptide at 139–163 (TTTPLIPPNAITAAILIFAFKALLL) is removed in mature form.

Belongs to the early nodulin-like (ENODL) family.

It is found in the cell membrane. In terms of biological role, may act as a carbohydrate transporter. This chain is Early nodulin-like protein 20, found in Arabidopsis thaliana (Mouse-ear cress).